The primary structure comprises 335 residues: MANSNNQLLKEIRFDWNKEEILEILNMPLIDLMWESQTIHRKFNKYDIQLASLFSVKTGGCEENCSYCSQSIYSASEIKSHPQFQVEEVLARAQIAKKEGADRFCMGWAWREIRDGKSFNAMLEMVSGVRDLGMEACVTAGMLTEEQAARLADAGLTAYNHNLDTSPEHYKNIITTRTYQDRLDTIKRVRNAGINVCCGGIIGLGETNGDRASLLKVLSNMNPHPESVPINSLVAIEGTGLEDNQEIDSIEMIRMIATARILMPKSKIRLSAGREKLSKEAQILCFQCGANSIFYGDELLTTSNPSFQSDRKLLKEVGVSFNKDFETREKTLSSL.

Residues 46–274 enclose the Radical SAM core domain; the sequence is YDIQLASLFS…KSKIRLSAGR (229 aa). Positions 61, 65, and 68 each coordinate [4Fe-4S] cluster. [2Fe-2S] cluster is bound by residues Cys105, Cys137, Cys197, and Arg269.

It belongs to the radical SAM superfamily. Biotin synthase family. As to quaternary structure, homodimer. It depends on [4Fe-4S] cluster as a cofactor. Requires [2Fe-2S] cluster as cofactor.

It carries out the reaction (4R,5S)-dethiobiotin + (sulfur carrier)-SH + 2 reduced [2Fe-2S]-[ferredoxin] + 2 S-adenosyl-L-methionine = (sulfur carrier)-H + biotin + 2 5'-deoxyadenosine + 2 L-methionine + 2 oxidized [2Fe-2S]-[ferredoxin]. Its pathway is cofactor biosynthesis; biotin biosynthesis; biotin from 7,8-diaminononanoate: step 2/2. Its function is as follows. Catalyzes the conversion of dethiobiotin (DTB) to biotin by the insertion of a sulfur atom into dethiobiotin via a radical-based mechanism. In Prochlorococcus marinus (strain MIT 9215), this protein is Biotin synthase.